A 337-amino-acid polypeptide reads, in one-letter code: UbiA prenyltransferase domain-containing protein 1 (337 aa).

The residue at position 2 (Ala-2) is an N-acetylalanine. A run of 8 helical transmembrane segments spans residues 82–102, 133–153, 159–179, 187–207, 208–228, 244–266, 276–296, and 314–334; these read LLVG…LVNT, FGVF…CLSP, LALI…GIGF, LVIL…VQVG, SLAV…EAVL, IVTL…LLFL, THCS…FSLE, and LNLL…AGSL.

It belongs to the UbiA prenyltransferase family. In terms of assembly, interacts with HMGCR and SOAT1.

It is found in the endoplasmic reticulum membrane. The protein localises to the golgi apparatus membrane. It localises to the mitochondrion membrane. It carries out the reaction menadiol + (2E,6E,10E)-geranylgeranyl diphosphate = menaquinol-4 + diphosphate. The enzyme catalyses all-trans-decaprenyl diphosphate + 4-hydroxybenzoate = 4-hydroxy-3-(all-trans-decaprenyl)benzoate + diphosphate. It participates in quinol/quinone metabolism; menaquinone biosynthesis. Its pathway is cofactor biosynthesis; ubiquinone biosynthesis. Its function is as follows. Prenyltransferase that mediates the formation of menaquinone-4 (MK-4) and coenzyme Q10. MK-4 is a vitamin K2 isoform required for endothelial cell development. Mediates the conversion of phylloquinone (PK) into MK-4, probably by cleaving the side chain of phylloquinone (PK) to release 2-methyl-1,4-naphthoquinone (menadione; K3) and then prenylating it with geranylgeranyl pyrophosphate (GGPP) to form MK-4. Also plays a role in cardiovascular development independently of MK-4 biosynthesis, by acting as a coenzyme Q10 biosynthetic enzyme: coenzyme Q10, also named ubiquinone, plays an important antioxidant role in the cardiovascular system. Mediates biosynthesis of coenzyme Q10 in the Golgi membrane, leading to protect cardiovascular tissues from NOS3/eNOS-dependent oxidative stress. This Ailuropoda melanoleuca (Giant panda) protein is UbiA prenyltransferase domain-containing protein 1 (UBIAD1).